The following is a 179-amino-acid chain: Translation initiation factor IF-3 (179 aa).

It belongs to the IF-3 family. Monomer.

It is found in the cytoplasm. Functionally, IF-3 binds to the 30S ribosomal subunit and shifts the equilibrium between 70S ribosomes and their 50S and 30S subunits in favor of the free subunits, thus enhancing the availability of 30S subunits on which protein synthesis initiation begins. The protein is Translation initiation factor IF-3 of Zymomonas mobilis subsp. mobilis (strain ATCC 31821 / ZM4 / CP4).